Reading from the N-terminus, the 679-residue chain is Stress-70 protein, mitochondrial (679 aa).

A mitochondrion-targeting transit peptide spans methionine 1–tyrosine 46. The segment at methionine 1 to valine 432 is interaction with NFS1. Residues threonine 63 and asparagine 64 each contribute to the ADP site. A nucleotide-binding domain (NBD) region spans residues threonine 63–aspartate 431. Lysine 76 is modified (N6-acetyllysine). The residue at position 87 (threonine 87) is a Phosphothreonine. N6-acetyllysine; alternate is present on residues lysine 135 and lysine 138. Residues lysine 135 and lysine 138 each carry the N6-succinyllysine; alternate modification. An N6-acetyllysine modification is found at lysine 143. Lysine 206 is subject to N6-acetyllysine; alternate. N6-succinyllysine; alternate is present on lysine 206. Lysine 206 carries the post-translational modification N6-malonyllysine; alternate. N6-acetyllysine occurs at positions 234 and 288. Lysine 300 is subject to N6-acetyllysine; alternate. At lysine 300 the chain carries N6-succinyllysine; alternate. Residues glutamate 313, lysine 316, and serine 320 each contribute to the ADP site. Residue lysine 360 is modified to N6-acetyllysine; alternate. At lysine 360 the chain carries N6-succinyllysine; alternate. Lysine 368 carries the post-translational modification N6-succinyllysine. ADP-binding residues include glycine 388 and arginine 391. Position 394 is an N6-succinyllysine (lysine 394). Serine 408 is modified (phosphoserine). The interdomain linker stretch occupies residues valine 432 to threonine 441. The segment at valine 432–glutamine 679 is interaction with FXN and ISCU. A substrate-binding domain (SBD) region spans residues proline 442–glutamine 679. An Omega-N-methylarginine modification is found at arginine 513. Lysine 567 and lysine 600 each carry N6-acetyllysine; alternate. 2 positions are modified to N6-succinyllysine; alternate: lysine 567 and lysine 600. Lysine 610 bears the N6-succinyllysine mark. Lysine 612 carries the N6-acetyllysine modification. N6-acetyllysine; alternate is present on lysine 646. The residue at position 646 (lysine 646) is an N6-succinyllysine; alternate. A disordered region spans residues alanine 656–glutamine 679. Basic and acidic residues predominate over residues glutamate 669–glutamine 679.

This sequence belongs to the heat shock protein 70 family. In terms of assembly, interacts strongly with the intermediate form of FXN and weakly with its mature form. Interacts with HSCB. Associates with the mitochondrial contact site and cristae organizing system (MICOS) complex, composed of at least MICOS10/MIC10, CHCHD3/MIC19, CHCHD6/MIC25, APOOL/MIC27, IMMT/MIC60, APOO/MIC23/MIC26 and QIL1/MIC13. This complex was also known under the names MINOS or MitOS complex. The MICOS complex associates with mitochondrial outer membrane proteins SAMM50, MTX1, MTX2 and DNAJC11, mitochondrial inner membrane protein TMEM11 and with HSPA9. Interacts with DNLZ, the interaction is required to prevent self-aggregation. Interacts with TESPA1. Interacts with PDPN. Interacts with NFU1, NFS1 and ISCU. Interacts with TP53; the interaction promotes TP53 degradation. Interacts (via SBD domain) with UBXN2A; the interaction with UBXN2A inhibits HSPA9/MOT-2 interaction with and degradation of TP53, thereby promotes TP53 translocation to the nucleus. Interacts with ITPR1 AND VDAC1; this interaction couples ITPR1 to VDAC1. Component of the TIM23 mitochondrial inner membrane pre-sequence translocase complex.

Its subcellular location is the mitochondrion. The protein resides in the nucleus. It is found in the nucleolus. The protein localises to the cytoplasm. It localises to the mitochondrion matrix. The catalysed reaction is ATP + H2O = ADP + phosphate + H(+). The chaperone activity is regulated by ATP-induced allosteric coupling of the nucleotide-binding (NBD) and substrate-binding (SBD) domains. ATP binding in the NBD leads to a conformational change in the NBD, which is transferred through the interdomain linker (IDL) to the substrate-binding domain (SBD). This elicits a reduced substrate affinity and a faster substrate exchange rate. Upon hydrolysis of ATP to ADP, the protein undergoes a conformational change that increases its affinity for substrate proteins. It cycles through repeated phases of ATP hydrolysis and nucleotide exchange, facilitating repeated cycles of substrate binding and release. Functions in collaboration with co-chaperones. Functions with the co-chaperone, DNLZ, to maintain solubility and regulate ATP hydrolysis. Nucleotide exchange factors, GRPEL1 and GRPEL2, accelerate nucleotide exchange. Functionally, mitochondrial chaperone that plays a key role in mitochondrial protein import, folding, and assembly. Plays an essential role in the protein quality control system, the correct folding of proteins, the re-folding of misfolded proteins, and the targeting of proteins for subsequent degradation. These processes are achieved through cycles of ATP binding, ATP hydrolysis, and ADP release, mediated by co-chaperones. In mitochondria, it associates with the TIM (translocase of the inner membrane) protein complex to assist in the import and folding of mitochondrial proteins. Plays an important role in mitochondrial iron-sulfur cluster (ISC) biogenesis, interacts with and stabilizes ISC cluster assembly proteins FXN, NFU1, NFS1 and ISCU. Regulates erythropoiesis via stabilization of ISC assembly. Regulates mitochondrial calcium-dependent apoptosis by coupling two calcium channels, ITPR1 and VDAC1, at the mitochondria-associated endoplasmic reticulum (ER) membrane to facilitate calcium transport from the ER lumen to the mitochondria intermembrane space, providing calcium for the downstream calcium channel MCU, which releases it into the mitochondrial matrix. Although primarily located in the mitochondria, it is also found in other cellular compartments. In the cytosol, it associates with proteins involved in signaling, apoptosis, or senescence. It may play a role in cell cycle regulation via its interaction with and promotion of degradation of TP53. May play a role in the control of cell proliferation and cellular aging. Protects against reactive oxygen species (ROS). Extracellular HSPA9 plays a cytoprotective role by preventing cell lysis following immune attack by the membrane attack complex by disrupting formation of the complex. The polypeptide is Stress-70 protein, mitochondrial (Cricetulus griseus (Chinese hamster)).